A 258-amino-acid chain; its full sequence is Phosphoribosylaminoimidazole-succinocarboxamide synthase (258 aa).

It belongs to the SAICAR synthetase family.

It carries out the reaction 5-amino-1-(5-phospho-D-ribosyl)imidazole-4-carboxylate + L-aspartate + ATP = (2S)-2-[5-amino-1-(5-phospho-beta-D-ribosyl)imidazole-4-carboxamido]succinate + ADP + phosphate + 2 H(+). It participates in purine metabolism; IMP biosynthesis via de novo pathway; 5-amino-1-(5-phospho-D-ribosyl)imidazole-4-carboxamide from 5-amino-1-(5-phospho-D-ribosyl)imidazole-4-carboxylate: step 1/2. The sequence is that of Phosphoribosylaminoimidazole-succinocarboxamide synthase from Maricaulis maris (strain MCS10) (Caulobacter maris).